The sequence spans 263 residues: Polyglutamine-binding protein 1 (263 aa).

A WW domain is found at E46–D80. Residues N94 to D263 form a disordered region. Over residues A99–D173 the composition is skewed to basic and acidic residues. Residues E104 to V110 form a 1-1; approximate repeat. Residues E104–S138 form a 5 X 7 AA approximate tandem repeats of D-R-[NS]-H-E-K-S region. One copy of the 1-2 repeat lies at D111 to S117. Residues D118–P124 form a 1-3; approximate repeat. The stretch at D125–A131 is one 1-4; approximate repeat. Tandem repeats lie at residues D132–S138, D139–R140, E141–R142, E143–R144, D150–R151, E152–R153, D154–R155, D156–R157, E158–R159, and E160–R161. The 3 X 2 AA tandem repeats of [DE]-R stretch occupies residues D139 to R144. The 6 X 2 AA tandem repeats of [DE]-R stretch occupies residues D150–R161. Residues Y243–N253 are important for interaction with TXNL4A. S245 is modified (phosphoserine).

In terms of assembly, interacts with POU3F2/Brn-2, ATXN1, TXNL4A, HTT and AR. Interaction with ATXN1 correlates positively with the length of the polyglutamine tract. Interacts with RNA polymerase II large subunit in a phosphorylation-dependent manner. Forms a ternary complex with ATXN1 mutant and phosphorylated RNA polymerase II. Interacts (via C-terminus) with TXNL4A and CD2BP2. Interacts (via WW domain) with ATN1 and SF3B1, and may interact with additional splice factors. Interacts (via WW domain) with WBP11; Leading to reduce interaction between PQBP1 and TXNL4A. Interacts with CAPRIN1. Interacts with DDX1. Interacts with SFPQ. Interacts with KHSRP.

The protein localises to the nucleus. It is found in the nucleus speckle. The protein resides in the cytoplasmic granule. Its function is as follows. Intrinsically disordered protein that acts as a scaffold, and which is involved in different processes, such as pre-mRNA splicing, transcription regulation, innate immunity and neuron development. Interacts with splicing-related factors via the intrinsically disordered region and regulates alternative splicing of target pre-mRNA species. May suppress the ability of POU3F2 to transactivate the DRD1 gene in a POU3F2 dependent manner. Can activate transcription directly or via association with the transcription machinery. May be involved in ATXN1 mutant-induced cell death. The interaction with ATXN1 mutant reduces levels of phosphorylated RNA polymerase II large subunit. Involved in the assembly of cytoplasmic stress granule, possibly by participating in the transport of neuronal RNA granules. Also acts as an innate immune sensor of infection by retroviruses, by detecting the presence of reverse-transcribed DNA in the cytosol. Directly binds retroviral reverse-transcribed DNA in the cytosol and interacts with CGAS, leading to activate the cGAS-STING signaling pathway, triggering type-I interferon production. This is Polyglutamine-binding protein 1 (Pqbp1) from Rattus norvegicus (Rat).